Consider the following 340-residue polypeptide: uncharacterized protein (340 aa).

The RING-CH-type zinc-finger motif lies at 6–70; that stretch reads KYEKSSARCW…PQCLTAYRIA (65 aa). 8 residues coordinate Zn(2+): Cys14, Cys17, Cys37, Cys39, His44, Cys47, Cys60, and Cys63. Transmembrane regions (helical) follow at residues 249 to 269, 274 to 294, and 300 to 320; these read EFWI…TKIL, PILL…GNFT, and IIGA…FIAW.

Its subcellular location is the membrane. This is an uncharacterized protein from Schizosaccharomyces pombe (strain 972 / ATCC 24843) (Fission yeast).